A 140-amino-acid chain; its full sequence is Nucleoside diphosphate kinase (140 aa).

6 residues coordinate ATP: K11, F59, R87, T93, R104, and N114. H117 serves as the catalytic Pros-phosphohistidine intermediate.

This sequence belongs to the NDK family. In terms of assembly, homotetramer. Mg(2+) serves as cofactor.

It is found in the cytoplasm. The enzyme catalyses a 2'-deoxyribonucleoside 5'-diphosphate + ATP = a 2'-deoxyribonucleoside 5'-triphosphate + ADP. It carries out the reaction a ribonucleoside 5'-diphosphate + ATP = a ribonucleoside 5'-triphosphate + ADP. Its function is as follows. Major role in the synthesis of nucleoside triphosphates other than ATP. The ATP gamma phosphate is transferred to the NDP beta phosphate via a ping-pong mechanism, using a phosphorylated active-site intermediate. This is Nucleoside diphosphate kinase from Rhodospirillum centenum (strain ATCC 51521 / SW).